The primary structure comprises 841 residues: Probable inorganic carbon transporter subunit DabA 1 (841 aa).

Zn(2+)-binding residues include cysteine 352, aspartate 354, histidine 536, and cysteine 551.

It belongs to the inorganic carbon transporter (TC 9.A.2) DabA family. Forms a complex with DabB. The cofactor is Zn(2+).

It localises to the cell inner membrane. Its function is as follows. Part of an energy-coupled inorganic carbon pump. In Bradyrhizobium sp. (strain ORS 278), this protein is Probable inorganic carbon transporter subunit DabA 1.